The sequence spans 404 residues: Coenzyme F420H(2) oxidase (404 aa).

Fe cation-binding residues include H84, E86, D88, H89, H152, D170, and H233. Positions V259–A399 constitute a Flavodoxin-like domain. FMN is bound by residues T265–T270, A317–D320, and S351–G356.

The protein in the N-terminal section; belongs to the zinc metallo-hydrolase group 3 family. The cofactor is FMN. Fe cation serves as cofactor.

It catalyses the reaction 2 reduced coenzyme F420-(gamma-L-Glu)(n) + O2 = 2 oxidized coenzyme F420-(gamma-L-Glu)(n) + 2 H2O + 2 H(+). In terms of biological role, catalyzes the oxidation of F420H(2) with O(2). May be involved in O(2) detoxification, reducing the intracellular O(2) concentration to a level allowing growth at the expense of methane formation. This chain is Coenzyme F420H(2) oxidase, found in Methanothermobacter thermautotrophicus (strain ATCC 29096 / DSM 1053 / JCM 10044 / NBRC 100330 / Delta H) (Methanobacterium thermoautotrophicum).